A 95-amino-acid polypeptide reads, in one-letter code: Exodeoxyribonuclease 7 small subunit (95 aa).

The protein belongs to the XseB family. Heterooligomer composed of large and small subunits.

The protein localises to the cytoplasm. It carries out the reaction Exonucleolytic cleavage in either 5'- to 3'- or 3'- to 5'-direction to yield nucleoside 5'-phosphates.. Bidirectionally degrades single-stranded DNA into large acid-insoluble oligonucleotides, which are then degraded further into small acid-soluble oligonucleotides. This is Exodeoxyribonuclease 7 small subunit from Corynebacterium aurimucosum (strain ATCC 700975 / DSM 44827 / CIP 107346 / CN-1) (Corynebacterium nigricans).